The following is a 368-amino-acid chain: Flagellar P-ring protein (368 aa).

Residues 1 to 22 (MLIPLARAVLALALLGAGAAHA) form the signal peptide.

This sequence belongs to the FlgI family. As to quaternary structure, the basal body constitutes a major portion of the flagellar organelle and consists of four rings (L,P,S, and M) mounted on a central rod.

The protein resides in the periplasm. It is found in the bacterial flagellum basal body. Functionally, assembles around the rod to form the L-ring and probably protects the motor/basal body from shearing forces during rotation. This Bordetella bronchiseptica (strain ATCC BAA-588 / NCTC 13252 / RB50) (Alcaligenes bronchisepticus) protein is Flagellar P-ring protein.